A 195-amino-acid polypeptide reads, in one-letter code: MRQATIQRNTLETKIELSVNLDGTGKADLNTGVPFLEHMLDQIARHGLIDLTIKADGDTHIDDHHTVEDIGISLGMALKEAVGDKKGIKRYGHSYVPLDEALSRVVIDLSGRPGLVFKADFTRASIGGFDTELVAEFFQGFTNHAQATLHIDCLRGKNAHHQAETIFKAFGRALRMALEADERMADQLPSTKGAL.

This sequence belongs to the imidazoleglycerol-phosphate dehydratase family.

It localises to the cytoplasm. It carries out the reaction D-erythro-1-(imidazol-4-yl)glycerol 3-phosphate = 3-(imidazol-4-yl)-2-oxopropyl phosphate + H2O. Its pathway is amino-acid biosynthesis; L-histidine biosynthesis; L-histidine from 5-phospho-alpha-D-ribose 1-diphosphate: step 6/9. The sequence is that of Imidazoleglycerol-phosphate dehydratase from Hydrogenovibrio crunogenus (strain DSM 25203 / XCL-2) (Thiomicrospira crunogena).